Consider the following 194-residue polypeptide: uncharacterized protein (194 aa).

To A.rhizogenes plasmid pRia4B ORF-3 in virA region.

This is an uncharacterized protein from Sinorhizobium fredii (strain NBRC 101917 / NGR234).